We begin with the raw amino-acid sequence, 329 residues long: Cytosolic arginine sensor for mTORC1 subunit 1 (329 aa).

The residue at position 14 (S14) is a Phosphoserine. 2 ACT domains span residues 72–138 (AEAT…HTLA) and 260–321 (GELW…EVLQ). Residues 111–112 (SV), G274, 280–281 (IV), and 300–304 (TFNFD) each bind L-arginine.

It belongs to the GATS family. As to quaternary structure, forms homodimers and heterodimers with CASTOR2. Interacts with the GATOR2 complex which is composed of MIOS, SEC13, SEH1L, WDR24 and WDR59; the interaction is negatively regulated by arginine. Interacts with TM4SF5; the interaction is positively regulated by leucine and is negatively regulated by arginine. Phosphorylation at Ser-14 by AKT1, promoting the interaction between CASTOR1 and RNF167. Post-translationally, ubiquitinated by RNF167 via 'Lys-29'-polyubiquitination, leading to its degradation, releasing the GATOR2 complex. Ubiquitination by RNF167 is promoted by phosphorylation at Ser-14 by AKT1.

The protein localises to the cytoplasm. It is found in the cytosol. Functions as an intracellular arginine sensor within the amino acid-sensing branch of the TORC1 signaling pathway. As a homodimer or a heterodimer with CASTOR2, binds and inhibits the GATOR subcomplex GATOR2 and thereby mTORC1. Binding of arginine to CASTOR1 allosterically disrupts the interaction of CASTOR1-containing dimers with GATOR2 which can in turn activate mTORC1 and the TORC1 signaling pathway. This is Cytosolic arginine sensor for mTORC1 subunit 1 from Bos taurus (Bovine).